A 277-amino-acid chain; its full sequence is MYTGDPPQTRRPVTVGRLQRMKADGQKVVALTAYDYTFAVAEDQAGVDVILVGDSLGMVVQGRDTTVPVTVEEMVYHTRCVTAARPSALVMADMPFMSYATLEDGLRNAARLMQEGGAQMIKLEGAGEQAELVARLARAGIPVCAHLGLQPQLVHKLGGYRVQGRESAAADAMLADAQALEAAGADLLLLECVPAELGRRISQGLEIPVIGIGAGPDCDGQILVLQDILGVTPGRIPRFSKNFMNGAGSIQCALQAYVQAVRSGAFPDAAHSFGGQG.

Residues D54 and D93 each contribute to the Mg(2+) site. Residues 54-55 (DS), D93, and K122 each bind 3-methyl-2-oxobutanoate. E124 lines the Mg(2+) pocket. E191 serves as the catalytic Proton acceptor.

Belongs to the PanB family. Homodecamer; pentamer of dimers. Mg(2+) serves as cofactor.

The protein localises to the cytoplasm. It catalyses the reaction 3-methyl-2-oxobutanoate + (6R)-5,10-methylene-5,6,7,8-tetrahydrofolate + H2O = 2-dehydropantoate + (6S)-5,6,7,8-tetrahydrofolate. It participates in cofactor biosynthesis; (R)-pantothenate biosynthesis; (R)-pantoate from 3-methyl-2-oxobutanoate: step 1/2. Catalyzes the reversible reaction in which hydroxymethyl group from 5,10-methylenetetrahydrofolate is transferred onto alpha-ketoisovalerate to form ketopantoate. This Alkalilimnicola ehrlichii (strain ATCC BAA-1101 / DSM 17681 / MLHE-1) protein is 3-methyl-2-oxobutanoate hydroxymethyltransferase.